The primary structure comprises 517 residues: GMP synthase [glutamine-hydrolyzing] (517 aa).

In terms of domain architecture, Glutamine amidotransferase type-1 spans 11–202; sequence KIIVLDFGSQ…AFKVCGAKAN (192 aa). The active-site Nucleophile is the cysteine 88. Active-site residues include histidine 176 and glutamate 178. A GMPS ATP-PPase domain is found at 203-392; sequence WTMDDFIEMQ…LGIPHDLVWR (190 aa). 230–236 serves as a coordination point for ATP; sequence SGGVDSS.

In terms of assembly, homodimer.

The enzyme catalyses XMP + L-glutamine + ATP + H2O = GMP + L-glutamate + AMP + diphosphate + 2 H(+). Its pathway is purine metabolism; GMP biosynthesis; GMP from XMP (L-Gln route): step 1/1. Its function is as follows. Catalyzes the synthesis of GMP from XMP. This is GMP synthase [glutamine-hydrolyzing] from Lactobacillus johnsonii (strain CNCM I-12250 / La1 / NCC 533).